The chain runs to 85 residues: Protein AC4 (85 aa).

A lipid anchor (N-myristoyl glycine; by host) is attached at glycine 2.

It belongs to the geminiviridae protein AC4/C4 family. As to quaternary structure, interacts with Arabidopsis thaliana ASK7/ASK-eta and ASK6/ASK-zeta proteins. Phosphorylated by Arabidopsis thaliana ASK7/ASK-eta mainly on threonine and serine residues.

The protein resides in the host cell membrane. Its function is as follows. Pathogenicity determinant. May act as a suppressor of RNA-mediated gene silencing, also known as post-transcriptional gene silencing (PTGS), a mechanism of plant viral defense that limits the accumulation of viral RNAs. May repress the AL61 promoter. This chain is Protein AC4, found in Solanum lycopersicum (Tomato).